The following is a 635-amino-acid chain: GTPase-GDP dissociation stimulator vimar (635 aa).

ARM repeat units lie at residues 72–118 (KSEV…NICY), 346–391 (TDSH…NLVI), 392–432 (PKPN…MTVD), and 510–550 (RSSL…ILSV).

In terms of assembly, interacts with Miro.

It localises to the endoplasmic reticulum. The protein localises to the mitochondrion. The protein resides in the cytoplasm. It is found in the cytosol. In terms of biological role, probably acts as a GEF (guanine nucleotide exchange factor) for the Rho family of small GTP-binding proteins (G proteins) that stimulates the dissociation of GDP to enable subsequent binding of GTP. May also chaperone the processing and/or trafficking of small GTPases independently of GEF activity. By interacting with Miro, promotes mitochondrial fission in response to high calcium concentrations. This is GTPase-GDP dissociation stimulator vimar from Drosophila melanogaster (Fruit fly).